Consider the following 671-residue polypeptide: DNA ligase (671 aa).

NAD(+) is bound by residues 32–36, 81–82, and E113; these read DAEYD and SL. K115 serves as the catalytic N6-AMP-lysine intermediate. Residues R136, E173, K290, and K314 each coordinate NAD(+). The Zn(2+) site is built by C408, C411, C426, and C432. One can recognise a BRCT domain in the interval 593–671; sequence EIDSPFAGKT…EAEMLRLLGS (79 aa).

The protein belongs to the NAD-dependent DNA ligase family. LigA subfamily. The cofactor is Mg(2+). Mn(2+) is required as a cofactor.

It carries out the reaction NAD(+) + (deoxyribonucleotide)n-3'-hydroxyl + 5'-phospho-(deoxyribonucleotide)m = (deoxyribonucleotide)n+m + AMP + beta-nicotinamide D-nucleotide.. In terms of biological role, DNA ligase that catalyzes the formation of phosphodiester linkages between 5'-phosphoryl and 3'-hydroxyl groups in double-stranded DNA using NAD as a coenzyme and as the energy source for the reaction. It is essential for DNA replication and repair of damaged DNA. In Escherichia coli O157:H7, this protein is DNA ligase.